Reading from the N-terminus, the 171-residue chain is Secreted protein CSS3 (171 aa).

Residues 1–20 (MVPLFGLFCIFSQLYSLCSA) form the signal peptide. Asparagine 37, asparagine 139, and asparagine 159 each carry an N-linked (GlcNAc...) asparagine glycan.

It localises to the cytoplasm. Its subcellular location is the secreted. The sequence is that of Secreted protein CSS3 from Saccharomyces cerevisiae (strain ATCC 204508 / S288c) (Baker's yeast).